A 563-amino-acid chain; its full sequence is Arginine--tRNA ligase (563 aa).

A 'HIGH' region motif is present at residues 121-131 (PNIAKPFSIGH).

It belongs to the class-I aminoacyl-tRNA synthetase family. As to quaternary structure, monomer.

The protein resides in the cytoplasm. The enzyme catalyses tRNA(Arg) + L-arginine + ATP = L-arginyl-tRNA(Arg) + AMP + diphosphate. This Streptococcus pneumoniae (strain CGSP14) protein is Arginine--tRNA ligase.